A 100-amino-acid polypeptide reads, in one-letter code: Urease subunit gamma (100 aa).

The protein belongs to the urease gamma subunit family. Heterotrimer of UreA (gamma), UreB (beta) and UreC (alpha) subunits. Three heterotrimers associate to form the active enzyme.

The protein localises to the cytoplasm. It catalyses the reaction urea + 2 H2O + H(+) = hydrogencarbonate + 2 NH4(+). It functions in the pathway nitrogen metabolism; urea degradation; CO(2) and NH(3) from urea (urease route): step 1/1. The polypeptide is Urease subunit gamma (Paraburkholderia phytofirmans (strain DSM 17436 / LMG 22146 / PsJN) (Burkholderia phytofirmans)).